Consider the following 78-residue polypeptide: Large ribosomal subunit protein bL28 (78 aa).

Residues 1 to 21 (MSRVCQVTGKKPMVGNNRSHA) form a disordered region.

It belongs to the bacterial ribosomal protein bL28 family.

This chain is Large ribosomal subunit protein bL28, found in Shewanella piezotolerans (strain WP3 / JCM 13877).